A 309-amino-acid chain; its full sequence is Polyprenal reductase (309 aa).

Helical transmembrane passes span leucine 12–isoleucine 32, phenylalanine 72–tyrosine 92, isoleucine 114–alanine 134, methionine 151–methionine 171, leucine 184–isoleucine 204, leucine 242–isoleucine 262, and phenylalanine 270–tyrosine 290.

It belongs to the steroid 5-alpha reductase family. Polyprenal reductase subfamily.

The protein localises to the endoplasmic reticulum membrane. The enzyme catalyses a di-trans,poly-cis-dolichal + NADP(+) = a di-trans,poly-cis-polyprenal + NADPH + H(+). Its pathway is protein modification; protein glycosylation. In terms of biological role, plays a key role in early steps of protein N-linked glycosylation by being involved in the conversion of polyprenol into dolichol. Acts as a polyprenal reductase that mediates the reduction of polyprenal into dolichal in a NADP-dependent mechanism. Dolichols are required for the synthesis of dolichol-linked monosaccharides and the oligosaccharide precursor used for N-glycosylation. The polypeptide is Polyprenal reductase (Caenorhabditis elegans).